The following is a 142-amino-acid chain: Large ribosomal subunit protein uL13 (142 aa).

Belongs to the universal ribosomal protein uL13 family. Part of the 50S ribosomal subunit.

In terms of biological role, this protein is one of the early assembly proteins of the 50S ribosomal subunit, although it is not seen to bind rRNA by itself. It is important during the early stages of 50S assembly. The polypeptide is Large ribosomal subunit protein uL13 (Pseudomonas fluorescens (strain ATCC BAA-477 / NRRL B-23932 / Pf-5)).